A 567-amino-acid polypeptide reads, in one-letter code: TGF-beta receptor type-2 (567 aa).

The first 23 residues, 1–23 (MGRGLLRGLWPLHIVLWTRIAST), serve as a signal peptide directing secretion. Topologically, residues 24–166 (IPPHVPKSVN…SPDLLLVIIQ (143 aa)) are extracellular. Cystine bridges form between Cys51/Cys84, Cys54/Cys71, Cys61/Cys67, Cys77/Cys101, Cys121/Cys136, and Cys138/Cys143. N-linked (GlcNAc...) asparagine glycosylation is found at Asn70 and Asn94. Residues 167 to 187 (VTGVSLLPPLGIAIAVIIIFY) form a helical membrane-spanning segment. Residues 188–567 (CYRVHRQQKL…PEDGSLNTTK (380 aa)) lie on the Cytoplasmic side of the membrane. A Protein kinase domain is found at 244–546 (IELDTLVGKG…RFSELEHPER (303 aa)). Residues 250–258 (VGKGRFAEV) and Lys277 contribute to the ATP site. The active-site Proton acceptor is the Asp379. Phosphoserine is present on residues Ser409, Ser548, and Ser553. Residues 545–567 (ERLSGRSCSQEKIPEDGSLNTTK) are disordered.

It belongs to the protein kinase superfamily. TKL Ser/Thr protein kinase family. TGFB receptor subfamily. In terms of assembly, homodimer. Heterohexamer; TGFB1, TGFB2 and TGFB3 homodimeric ligands assemble a functional receptor composed of two TGFBR1 and TGFBR2 heterodimers to form a ligand-receptor heterohexamer. The respective affinity of TGFRB1 and TGFRB2 for the ligands may modulate the kinetics of assembly of the receptor and may explain the different biological activities of TGFB1, TGFB2 and TGFB3. Component of a complex composed of TSC22D1 (via N-terminus), TGFBR1 and TGFBR2; the interaction between TSC22D1 and TGFBR1 is inhibited by SMAD7 and promoted by TGFB1. Interacts with DAXX. Interacts with DYNLT4. Interacts with ZFYVE9; ZFYVE9 recruits SMAD2 and SMAD3 to the TGF-beta receptor. Interacts with and is activated by SCUBE3; this interaction does not affect TGFB1-binding to TGFBR2. Interacts with VPS39; this interaction is independent of the receptor kinase activity and of the presence of TGF-beta. Interacts with CLU. The cofactor is Mg(2+). It depends on Mn(2+) as a cofactor. Post-translationally, phosphorylated on a Ser/Thr residue in the cytoplasmic domain. As to expression, widely expressed in adult. Expressed primarily in mesenchyme and epidermis of the midgestational fetus.

Its subcellular location is the cell membrane. The protein localises to the membrane raft. The catalysed reaction is L-threonyl-[receptor-protein] + ATP = O-phospho-L-threonyl-[receptor-protein] + ADP + H(+). It catalyses the reaction L-seryl-[receptor-protein] + ATP = O-phospho-L-seryl-[receptor-protein] + ADP + H(+). In terms of biological role, transmembrane serine/threonine kinase forming with the TGF-beta type I serine/threonine kinase receptor, TGFBR1, the non-promiscuous receptor for the TGF-beta cytokines TGFB1, TGFB2 and TGFB3. Transduces the TGFB1, TGFB2 and TGFB3 signal from the cell surface to the cytoplasm and is thus regulating a plethora of physiological and pathological processes including cell cycle arrest in epithelial and hematopoietic cells, control of mesenchymal cell proliferation and differentiation, wound healing, extracellular matrix production, immunosuppression and carcinogenesis. The formation of the receptor complex composed of 2 TGFBR1 and 2 TGFBR2 molecules symmetrically bound to the cytokine dimer results in the phosphorylation and the activation of TGFRB1 by the constitutively active TGFBR2. Activated TGFBR1 phosphorylates SMAD2 which dissociates from the receptor and interacts with SMAD4. The SMAD2-SMAD4 complex is subsequently translocated to the nucleus where it modulates the transcription of the TGF-beta-regulated genes. This constitutes the canonical SMAD-dependent TGF-beta signaling cascade. Also involved in non-canonical, SMAD-independent TGF-beta signaling pathways. Its function is as follows. Has transforming growth factor beta-activated receptor activity. The protein is TGF-beta receptor type-2 (Tgfbr2) of Mus musculus (Mouse).